A 534-amino-acid chain; its full sequence is Protein FAM83D (534 aa).

2 disordered regions span residues 320-372 and 501-534; these read TPPS…STLG and GLNRGRKAQQEARQPNTNIDSGIMGTWPKSRGLQ. Over residues 329-342 the composition is skewed to polar residues; that stretch reads TKPQAERLTSTPAR. The span at 350–362 shows a compositional bias: basic and acidic residues; that stretch reads RMNKDIEEPDRKS. Residues 511–520 are compositionally biased toward polar residues; that stretch reads EARQPNTNID.

The protein belongs to the FAM83 family.

It localises to the cytoplasm. Its subcellular location is the cytoskeleton. The protein resides in the spindle. It is found in the spindle pole. Its function is as follows. May regulate cell proliferation, growth, migration and epithelial to mesenchymal transition. May also be important for proper chromosome congression and alignment during mitosis. The sequence is that of Protein FAM83D from Danio rerio (Zebrafish).